Consider the following 401-residue polypeptide: ADP-forming sulfoacetate-CoA ligase subunit SqwK (401 aa).

Positions 9–217 constitute an ATP-grasp domain; sequence KTVFSEHKIP…DNSVFRQPRF (209 aa). ATP is bound at residue 35–96; sequence KSVGFPSVVK…EEAVHIDKEI (62 aa). Residues Glu185 and Asn187 each coordinate Mg(2+).

This sequence belongs to the succinate/malate CoA ligase beta subunit family. In terms of assembly, forms a complex with SqwL. Mg(2+) is required as a cofactor.

It catalyses the reaction sulfoacetate + ATP + CoA = sulfoacetyl-CoA + ADP + phosphate. Functionally, part of a variant of the sulfo-TK pathway, a D-sulfoquinovose degradation pathway that produces sulfoacetate. Hydrolyzes sulfoacetyl-coenzyme A (sulfoacetyl-CoA) to produce sulfoacetate and CoA coupled with the phosphorylation of ADP to generate ATP. Cannot use succinate, acetate or 3-hydroxypropionate, and shows only residual activities with malonate and 3-sulfopropanoate. The protein is ADP-forming sulfoacetate-CoA ligase subunit SqwK of Acholeplasma sp.